A 166-amino-acid chain; its full sequence is uncharacterized protein (166 aa).

4Fe-4S ferredoxin-type domains are found at residues 44–73, 75–104, and 139–166; these read AREDLFSAVCNGCGECASACPNGLIQLKQQ, ATLEIDYAPCDLCGKCAEVCPTNALHPNFP, and STLEIDNERCNGCGECKITCFVAAITLK. Residues Cys53, Cys56, Cys59, Cys63, Cys84, Cys87, Cys90, and Cys94 each coordinate [4Fe-4S] cluster.

This is an uncharacterized protein from Haemophilus influenzae (strain ATCC 51907 / DSM 11121 / KW20 / Rd).